The following is a 190-amino-acid chain: Protein soem-1 (190 aa).

In terms of domain architecture, SH2 spans 96-190 (YMEQNMNRVE…LVLKNQLKPV (95 aa)).

In terms of assembly, interacts with abl-1. As to expression, expressed in PQR, but not AQR, Q neuroblast descendents.

Functionally, functions downstream of migratory protein mig-13 and may play a role in the control of Q neuroblast migration during larval development. The protein is Protein soem-1 of Caenorhabditis elegans.